A 365-amino-acid chain; its full sequence is tRNA N6-adenosine threonylcarbamoyltransferase (365 aa).

Fe cation contacts are provided by H119 and H123. Substrate is bound by residues 141–145, D174, and G187; that span reads LVSGG. Positions 184–203 are disordered; sequence QPGGPSVEGEARQGDPKRFR. Basic and acidic residues predominate over residues 192 to 201; that stretch reads GEARQGDPKR. N289 provides a ligand contact to substrate. D317 is a binding site for Fe cation. The disordered stretch occupies residues 342–365; it reads ARPRWPLDQSSPAMLGSGKKGAKA.

The protein belongs to the KAE1 / TsaD family. Fe(2+) is required as a cofactor.

The protein localises to the cytoplasm. The enzyme catalyses L-threonylcarbamoyladenylate + adenosine(37) in tRNA = N(6)-L-threonylcarbamoyladenosine(37) in tRNA + AMP + H(+). Functionally, required for the formation of a threonylcarbamoyl group on adenosine at position 37 (t(6)A37) in tRNAs that read codons beginning with adenine. Is involved in the transfer of the threonylcarbamoyl moiety of threonylcarbamoyl-AMP (TC-AMP) to the N6 group of A37, together with TsaE and TsaB. TsaD likely plays a direct catalytic role in this reaction. This Ruegeria pomeroyi (strain ATCC 700808 / DSM 15171 / DSS-3) (Silicibacter pomeroyi) protein is tRNA N6-adenosine threonylcarbamoyltransferase.